We begin with the raw amino-acid sequence, 314 residues long: Lipoyl synthase (314 aa).

Cys60, Cys65, Cys71, Cys86, Cys90, Cys93, and Ser300 together coordinate [4Fe-4S] cluster. Residues 72–289 (FRKGTATFMI…RQFGLSIGFS (218 aa)) enclose the Radical SAM core domain.

Belongs to the radical SAM superfamily. Lipoyl synthase family. It depends on [4Fe-4S] cluster as a cofactor.

The protein resides in the cytoplasm. It carries out the reaction [[Fe-S] cluster scaffold protein carrying a second [4Fe-4S](2+) cluster] + N(6)-octanoyl-L-lysyl-[protein] + 2 oxidized [2Fe-2S]-[ferredoxin] + 2 S-adenosyl-L-methionine + 4 H(+) = [[Fe-S] cluster scaffold protein] + N(6)-[(R)-dihydrolipoyl]-L-lysyl-[protein] + 4 Fe(3+) + 2 hydrogen sulfide + 2 5'-deoxyadenosine + 2 L-methionine + 2 reduced [2Fe-2S]-[ferredoxin]. It participates in protein modification; protein lipoylation via endogenous pathway; protein N(6)-(lipoyl)lysine from octanoyl-[acyl-carrier-protein]: step 2/2. In terms of biological role, catalyzes the radical-mediated insertion of two sulfur atoms into the C-6 and C-8 positions of the octanoyl moiety bound to the lipoyl domains of lipoate-dependent enzymes, thereby converting the octanoylated domains into lipoylated derivatives. The protein is Lipoyl synthase of Pelobacter propionicus (strain DSM 2379 / NBRC 103807 / OttBd1).